We begin with the raw amino-acid sequence, 617 residues long: Tetratricopeptide repeat protein 39B (617 aa).

TPR repeat units lie at residues 328–361 (SLIL…QEEW) and 561–594 (PFTL…YKDY).

The protein belongs to the TTC39 family.

Its function is as follows. Regulates high density lipoprotein (HDL) cholesterol metabolism by promoting the ubiquitination and degradation of the oxysterols receptors LXR (NR1H2 and NR1H3). The protein is Tetratricopeptide repeat protein 39B (Ttc39b) of Rattus norvegicus (Rat).